A 117-amino-acid chain; its full sequence is CUE domain-containing protein CUE4 (117 aa).

Positions 27 to 74 are disordered; it reads QVPSRTVQDAKPAPSVATNDPSPEPVPSAPEERVARLNRHGSDRKRAV. Residue Lys-37 forms a Glycyl lysine isopeptide (Lys-Gly) (interchain with G-Cter in ubiquitin) linkage. Residue Ser-48 is modified to Phosphoserine. Positions 56–74 are enriched in basic and acidic residues; it reads PEERVARLNRHGSDRKRAV. The region spanning 74–116 is the CUE domain; it reads VNSDMVEIVMTMAPHVPQEKVVQDLRNTGSIEHTMENIFAGKL.

Ubiquitinated.

It is found in the cytoplasm. The protein localises to the endoplasmic reticulum. The chain is CUE domain-containing protein CUE4 (CUE4) from Saccharomyces cerevisiae (strain ATCC 204508 / S288c) (Baker's yeast).